Here is a 289-residue protein sequence, read N- to C-terminus: Ribosomal RNA small subunit methyltransferase H (289 aa).

Residues 40–42, aspartate 60, phenylalanine 84, aspartate 106, and glutamine 113 each bind S-adenosyl-L-methionine; that span reads GGH.

It belongs to the methyltransferase superfamily. RsmH family.

It localises to the cytoplasm. It catalyses the reaction cytidine(1402) in 16S rRNA + S-adenosyl-L-methionine = N(4)-methylcytidine(1402) in 16S rRNA + S-adenosyl-L-homocysteine + H(+). Specifically methylates the N4 position of cytidine in position 1402 (C1402) of 16S rRNA. In Haemophilus influenzae (strain PittGG), this protein is Ribosomal RNA small subunit methyltransferase H.